The following is a 138-amino-acid chain: Methane monooxygenase regulatory protein B (138 aa).

Belongs to the TmoD/XamoD family. The soluble methane monooxygenase (sMMO) consists of four components A/MMOH (composed of alpha/MmoX, beta/MmoY and gamma/MmoZ), B/MMOB (MmoB), C/MMOR (MmoC) and D/MMOD (MmoD).

Functionally, the B protein acts as a regulator of electron flow through the soluble mmo complex, switching the enzyme from an oxidase to a hydroxylase in the presence of the substrate. The sequence is that of Methane monooxygenase regulatory protein B (mmoB) from Methylosinus trichosporium.